Reading from the N-terminus, the 168-residue chain is Cell division inhibitor SulA (168 aa).

The tract at residues 106–112 is ftsZ binding; the sequence is ALLTGNY. The interval 161 to 168 is lon protease binding; sequence KIHSSLYH.

It belongs to the SulA family. As to quaternary structure, interacts with FtsZ. In terms of processing, is rapidly cleaved and degraded by the Lon protease once DNA damage is repaired.

In terms of biological role, component of the SOS system and an inhibitor of cell division. Accumulation of SulA causes rapid cessation of cell division and the appearance of long, non-septate filaments. In the presence of GTP, binds a polymerization-competent form of FtsZ in a 1:1 ratio, thus inhibiting FtsZ polymerization and therefore preventing it from participating in the assembly of the Z ring. This mechanism prevents the premature segregation of damaged DNA to daughter cells during cell division. This Serratia proteamaculans (strain 568) protein is Cell division inhibitor SulA.